Reading from the N-terminus, the 224-residue chain is Deoxyribose-phosphate aldolase (224 aa).

Asp-92 functions as the Proton donor/acceptor in the catalytic mechanism. Catalysis depends on Lys-155, which acts as the Schiff-base intermediate with acetaldehyde. The Proton donor/acceptor role is filled by Lys-184.

The protein belongs to the DeoC/FbaB aldolase family. DeoC type 1 subfamily.

It localises to the cytoplasm. It catalyses the reaction 2-deoxy-D-ribose 5-phosphate = D-glyceraldehyde 3-phosphate + acetaldehyde. It functions in the pathway carbohydrate degradation; 2-deoxy-D-ribose 1-phosphate degradation; D-glyceraldehyde 3-phosphate and acetaldehyde from 2-deoxy-alpha-D-ribose 1-phosphate: step 2/2. Its function is as follows. Catalyzes a reversible aldol reaction between acetaldehyde and D-glyceraldehyde 3-phosphate to generate 2-deoxy-D-ribose 5-phosphate. The protein is Deoxyribose-phosphate aldolase of Clostridium perfringens (strain SM101 / Type A).